A 498-amino-acid polypeptide reads, in one-letter code: ADP,ATP carrier protein 1 (498 aa).

At 1–33 (MSTTKSDNYISELRKVIWPIERYENKKFLPMAF) the chain is on the cytoplasmic side. Residues 34-54 (MMFCILLNYSTLRSIKDGFVV) traverse the membrane as a helical segment. Cysteines 37 and 85 form a disulfide. Topologically, residues 55-67 (TDIGAEAISFLKT) are extracellular. The chain crosses the membrane as a helical span at residues 68–88 (YIVLPSAVIAMIVYVKLCDIL). Over 89–92 (KQEN) the chain is Cytoplasmic. Residues 93 to 113 (VFYVITSFFLAYFALFAFVLY) form a helical membrane-spanning segment. Over 114–147 (PNPDLVHPNPEAIESLSLAYPNFKWFIRIVGKWS) the chain is Extracellular. A helical membrane pass occupies residues 148-168 (FASFYTMAELWGTLMLSLLFW). Residues 169-184 (QFANQITKTDEAKRFY) lie on the Cytoplasmic side of the membrane. The chain crosses the membrane as a helical span at residues 185–205 (SMFGLLANLALPVTSLIIGYF). At 206 to 218 (LHEKTQIVAEHLK) the chain is on the extracellular side. Residues 219–239 (FTPLFVIMIISSLAVILTYRW) form a helical membrane-spanning segment. Topologically, residues 240–279 (MNKNVLTDPKLYDPALVKGKKAKAKMSLIESFKMIFTSKY) are cytoplasmic. A helical transmembrane segment spans residues 280–300 (VGYIALLLIAYGISVNLVEGV). Over 301 to 320 (WKSKLKELHPTKEAYTMYMG) the chain is Extracellular. Residues 321 to 341 (QFQAYQGWVAIAFMIIGSNIL) form a helical membrane-spanning segment. The Cytoplasmic segment spans residues 342 to 348 (RKVSWLT). A helical membrane pass occupies residues 349 to 369 (AAMITPLMMLITGIAFFAFIF). At 370 to 379 (FDSVIAMYLT) the chain is on the extracellular side. Residues 380–400 (GILASGPLALAVMIGTIQNVL) traverse the membrane as a helical segment. Topologically, residues 401-438 (SKGVKYSLFDATKNMAYIPLDKDLRVKGQAAVEVIGGR) are cytoplasmic. ATP is bound at residue 436 to 442 (GGRFGKS). Residues 439–459 (FGKSGGAIIQSTFFIIFPALG) traverse the membrane as a helical segment. The Extracellular segment spans residues 460-465 (FVEATP). A helical transmembrane segment spans residues 466–486 (YFASIFFVIVILWIYAVKGLN). Over 487–498 (KEYQVLVNNTEK) the chain is Cytoplasmic.

This sequence belongs to the ADP/ATP translocase tlc family.

It localises to the cell membrane. In terms of biological role, provides the rickettsial cell with host ATP in exchange for rickettsial ADP. This is an obligate exchange system. This energy acquiring activity is an important component of rickettsial parasitism. The polypeptide is ADP,ATP carrier protein 1 (tlcA) (Rickettsia bellii (strain RML369-C)).